Reading from the N-terminus, the 236-residue chain is Ubiquinone biosynthesis O-methyltransferase (236 aa).

S-adenosyl-L-methionine contacts are provided by arginine 39, glycine 59, aspartate 80, and methionine 124.

It belongs to the methyltransferase superfamily. UbiG/COQ3 family.

The enzyme catalyses a 3-demethylubiquinol + S-adenosyl-L-methionine = a ubiquinol + S-adenosyl-L-homocysteine + H(+). It carries out the reaction a 3-(all-trans-polyprenyl)benzene-1,2-diol + S-adenosyl-L-methionine = a 2-methoxy-6-(all-trans-polyprenyl)phenol + S-adenosyl-L-homocysteine + H(+). Its pathway is cofactor biosynthesis; ubiquinone biosynthesis. In terms of biological role, O-methyltransferase that catalyzes the 2 O-methylation steps in the ubiquinone biosynthetic pathway. This Pseudoalteromonas translucida (strain TAC 125) protein is Ubiquinone biosynthesis O-methyltransferase.